The primary structure comprises 299 residues: MTDNTRLRIAMQKSGRLSDDSRELLARCGIKINLHTQRLIAMAENMPIDILRVRDDDIPGLVMDGVVDLGIIGENVLEEELLNRRAQGEDPRYFTLRRLDFGGCRLSLATPVDEAWDGPLSLNGKRIATSYPHLLKRYLDQKGICFKSCLLNGSVEVAPRAGLADAICDLVSTGATLEANGLREVEVIYRSKACLIQRDGEMEESKQQLIDKLLTRIQGVIQARESKYIMMHAPTERLDEVIALLPGAERPTILPLAGDQQRVAMHMVSSETLFWETMEKLKALGASSILVLPIEKMME.

The protein belongs to the ATP phosphoribosyltransferase family. Long subfamily. Equilibrium between an active dimeric form, an inactive hexameric form and higher aggregates. Interconversion between the various forms is largely reversible and is influenced by the natural substrates and inhibitors of the enzyme. The cofactor is Mg(2+).

It is found in the cytoplasm. The catalysed reaction is 1-(5-phospho-beta-D-ribosyl)-ATP + diphosphate = 5-phospho-alpha-D-ribose 1-diphosphate + ATP. The protein operates within amino-acid biosynthesis; L-histidine biosynthesis; L-histidine from 5-phospho-alpha-D-ribose 1-diphosphate: step 1/9. Feedback inhibited by histidine. Catalyzes the condensation of ATP and 5-phosphoribose 1-diphosphate to form N'-(5'-phosphoribosyl)-ATP (PR-ATP). Has a crucial role in the pathway because the rate of histidine biosynthesis seems to be controlled primarily by regulation of HisG enzymatic activity. The sequence is that of ATP phosphoribosyltransferase from Escherichia coli O81 (strain ED1a).